Here is a 202-residue protein sequence, read N- to C-terminus: Imidazoleglycerol-phosphate dehydratase (202 aa).

The protein belongs to the imidazoleglycerol-phosphate dehydratase family.

The protein localises to the cytoplasm. The catalysed reaction is D-erythro-1-(imidazol-4-yl)glycerol 3-phosphate = 3-(imidazol-4-yl)-2-oxopropyl phosphate + H2O. It functions in the pathway amino-acid biosynthesis; L-histidine biosynthesis; L-histidine from 5-phospho-alpha-D-ribose 1-diphosphate: step 6/9. The sequence is that of Imidazoleglycerol-phosphate dehydratase from Rhizobium etli (strain CIAT 652).